The primary structure comprises 75 residues: Small ribosomal subunit protein bS18c (75 aa).

Residues 1–12 show a composition bias toward basic residues; that stretch reads MNKSKRSFRRRL. Residues 1–21 are disordered; that stretch reads MNKSKRSFRRRLPPIGSRDQI.

Belongs to the bacterial ribosomal protein bS18 family. As to quaternary structure, part of the 30S ribosomal subunit.

It localises to the plastid. Its subcellular location is the chloroplast. The polypeptide is Small ribosomal subunit protein bS18c (Cycas taitungensis (Prince sago)).